The following is a 245-amino-acid chain: Protein crossbronx (245 aa).

The 158-residue stretch at 20 to 177 folds into the UBC core domain; that stretch reads HQEYKILAEY…VQESIAESKA (158 aa).

The protein belongs to the ubiquitin-conjugating enzyme family. FTS subfamily.

In Drosophila mojavensis (Fruit fly), this protein is Protein crossbronx (cbx).